The primary structure comprises 175 residues: Phytochrome-interacting ankyrin-repeat protein 1 (175 aa).

ANK repeat units lie at residues 30-59 (RGWTQLHIKAREGDLKAVKELLDQGADVNA), 67-96 (KGMTPLHLAAKGGHIEVMDLLLERGANMEA), and 102-131 (CGWTPLHAAAKERKREAVKFLVGNGAFLPD).

In terms of assembly, interacts with phytochrome A (PHYA), both in Pr and Pfr forms.

The protein resides in the cytoplasm. The protein localises to the nucleus. It is found in the mitochondrion. The chain is Phytochrome-interacting ankyrin-repeat protein 1 from Arabidopsis thaliana (Mouse-ear cress).